Here is a 275-residue protein sequence, read N- to C-terminus: Large ribosomal subunit protein uL2 (275 aa).

The disordered stretch occupies residues 223–275 (VAMNPVDHPHGGGEGRTSGGRHPVTPWGVPTKGYKTRSNKRTDKYIVRRRNKK).

Belongs to the universal ribosomal protein uL2 family. As to quaternary structure, part of the 50S ribosomal subunit. Forms a bridge to the 30S subunit in the 70S ribosome.

One of the primary rRNA binding proteins. Required for association of the 30S and 50S subunits to form the 70S ribosome, for tRNA binding and peptide bond formation. It has been suggested to have peptidyltransferase activity; this is somewhat controversial. Makes several contacts with the 16S rRNA in the 70S ribosome. This Shewanella loihica (strain ATCC BAA-1088 / PV-4) protein is Large ribosomal subunit protein uL2.